Reading from the N-terminus, the 205-residue chain is Putative glutamine amidotransferase-like protein L716 (205 aa).

The 176-residue stretch at 1–176 (MLLIIQNGYI…SNHIESYDYA (176 aa)) folds into the Glutamine amidotransferase type-1 domain. Catalysis depends on for GATase activity residues Cys82, His155, and Asp157.

The sequence is that of Putative glutamine amidotransferase-like protein L716 from Acanthamoeba polyphaga mimivirus (APMV).